The sequence spans 239 residues: Aspartate/glutamate leucyltransferase (239 aa).

It belongs to the R-transferase family. Bpt subfamily.

The protein resides in the cytoplasm. It carries out the reaction N-terminal L-glutamyl-[protein] + L-leucyl-tRNA(Leu) = N-terminal L-leucyl-L-glutamyl-[protein] + tRNA(Leu) + H(+). The catalysed reaction is N-terminal L-aspartyl-[protein] + L-leucyl-tRNA(Leu) = N-terminal L-leucyl-L-aspartyl-[protein] + tRNA(Leu) + H(+). Functions in the N-end rule pathway of protein degradation where it conjugates Leu from its aminoacyl-tRNA to the N-termini of proteins containing an N-terminal aspartate or glutamate. This is Aspartate/glutamate leucyltransferase from Alkalilimnicola ehrlichii (strain ATCC BAA-1101 / DSM 17681 / MLHE-1).